A 514-amino-acid polypeptide reads, in one-letter code: ATP synthase subunit alpha (514 aa).

170–177 (GDRQTGKT) contributes to the ATP binding site.

It belongs to the ATPase alpha/beta chains family. F-type ATPases have 2 components, CF(1) - the catalytic core - and CF(0) - the membrane proton channel. CF(1) has five subunits: alpha(3), beta(3), gamma(1), delta(1), epsilon(1). CF(0) has three main subunits: a(1), b(2) and c(9-12). The alpha and beta chains form an alternating ring which encloses part of the gamma chain. CF(1) is attached to CF(0) by a central stalk formed by the gamma and epsilon chains, while a peripheral stalk is formed by the delta and b chains.

It localises to the cell inner membrane. The enzyme catalyses ATP + H2O + 4 H(+)(in) = ADP + phosphate + 5 H(+)(out). Produces ATP from ADP in the presence of a proton gradient across the membrane. The alpha chain is a regulatory subunit. In Acidithiobacillus ferridurans, this protein is ATP synthase subunit alpha.